The following is a 443-amino-acid chain: Chromosome partition protein MukF (443 aa).

The tract at residues 209–237 (LDETSGNLRELQDTLNAAGDKLQAQLLRI) is leucine-zipper.

This sequence belongs to the MukF family. In terms of assembly, interacts, and probably forms a ternary complex, with MukE and MukB via its C-terminal region. The complex formation is stimulated by calcium or magnesium. It is required for an interaction between MukE and MukB.

It is found in the cytoplasm. It localises to the nucleoid. Functionally, involved in chromosome condensation, segregation and cell cycle progression. May participate in facilitating chromosome segregation by condensation DNA from both sides of a centrally located replisome during cell division. Not required for mini-F plasmid partitioning. Probably acts via its interaction with MukB and MukE. Overexpression results in anucleate cells. It has a calcium binding activity. This Actinobacillus pleuropneumoniae serotype 7 (strain AP76) protein is Chromosome partition protein MukF.